A 156-amino-acid chain; its full sequence is Ribosome maturation factor RimP (156 aa).

Belongs to the RimP family.

Its subcellular location is the cytoplasm. Required for maturation of 30S ribosomal subunits. This is Ribosome maturation factor RimP from Oceanobacillus iheyensis (strain DSM 14371 / CIP 107618 / JCM 11309 / KCTC 3954 / HTE831).